The sequence spans 279 residues: MGIVFNYIDPVAFNLGPLSVRWYGIIIAVGILLGYFVAQRALVKAGLHKDTLVDIIFYSALFGFIAARIYFVIFQWPYYAENPSEIIKIWHGGIAIHGGLIGGFIAGVIVCKVKNLNPFQIGDIVAPSIILAQGIGRWGNFMNHEAHGGSVSRAFLEQLHLPNFIIENMYINGQYYHPTFLYESIWDVAGFIILVNIRKHLKLGETFFLYLTWYSIGRFFIEGLRTDSLMLTSNIRVAQLVSILLILISISLIVYRRIKYNPPLYSKVGALPWPTKKVK.

A run of 3 helical transmembrane segments spans residues 18-38, 55-75, and 89-109; these read LSVRWYGIIIAVGILLGYFVA, IIFYSALFGFIAARIYFVIFQ, and IWHGGIAIHGGLIGGFIAGVI. Arg137 serves as a coordination point for a 1,2-diacyl-sn-glycero-3-phospho-(1'-sn-glycerol). 2 consecutive transmembrane segments (helical) span residues 203 to 223 and 235 to 255; these read LGETFFLYLTWYSIGRFFIEG and IRVAQLVSILLILISISLIVY.

The protein belongs to the Lgt family.

The protein localises to the cell membrane. The catalysed reaction is L-cysteinyl-[prolipoprotein] + a 1,2-diacyl-sn-glycero-3-phospho-(1'-sn-glycerol) = an S-1,2-diacyl-sn-glyceryl-L-cysteinyl-[prolipoprotein] + sn-glycerol 1-phosphate + H(+). It participates in protein modification; lipoprotein biosynthesis (diacylglyceryl transfer). Catalyzes the transfer of the diacylglyceryl group from phosphatidylglycerol to the sulfhydryl group of the N-terminal cysteine of a prolipoprotein, the first step in the formation of mature lipoproteins. The polypeptide is Phosphatidylglycerol--prolipoprotein diacylglyceryl transferase (Staphylococcus aureus (strain USA300)).